Here is a 100-residue protein sequence, read N- to C-terminus: NADH-quinone oxidoreductase subunit K (100 aa).

Helical transmembrane passes span 4 to 24, 28 to 48, and 60 to 80; these read LTHGLILAAILFVLGLTGLVI, LLFMLISLEIMINAAALAFVV, and IMYILAISLAAAEASIGLALL.

Belongs to the complex I subunit 4L family. NDH-1 is composed of 13 different subunits. Subunits NuoA, H, J, K, L, M, N constitute the membrane sector of the complex.

The protein localises to the cell inner membrane. It catalyses the reaction a quinone + NADH + 5 H(+)(in) = a quinol + NAD(+) + 4 H(+)(out). Its function is as follows. NDH-1 shuttles electrons from NADH, via FMN and iron-sulfur (Fe-S) centers, to quinones in the respiratory chain. The immediate electron acceptor for the enzyme in this species is believed to be ubiquinone. Couples the redox reaction to proton translocation (for every two electrons transferred, four hydrogen ions are translocated across the cytoplasmic membrane), and thus conserves the redox energy in a proton gradient. In Klebsiella pneumoniae (strain 342), this protein is NADH-quinone oxidoreductase subunit K.